The primary structure comprises 179 residues: X-linked lymphocyte-regulated protein 5C (179 aa).

The segment covering 1-11 (MSNKEQKDMKK) has biased composition (basic and acidic residues). The tract at residues 1–75 (MSNKEQKDMK…MQDFKGDDGT (75 aa)) is disordered. Low complexity predominate over residues 42–53 (GTSGMGSHSSGS). The segment covering 56 to 75 (QEAREPVQKKMQDFKGDDGT) has biased composition (basic and acidic residues). The stretch at 146–175 (ITQQQMKILQTAIEDHETKLKNAKDMCDTF) forms a coiled coil.

It belongs to the XLR/SYCP3 family. In terms of tissue distribution, expressed in testis (at protein level). Also expressed in ovary. Not detected in other tissues tested.

It localises to the nucleus. The protein localises to the chromosome. This Mus musculus (Mouse) protein is X-linked lymphocyte-regulated protein 5C.